The sequence spans 488 residues: Glutamyl-tRNA(Gln) amidotransferase subunit A (488 aa).

Catalysis depends on charge relay system residues Lys-77 and Ser-152. The active-site Acyl-ester intermediate is the Ser-176.

Belongs to the amidase family. GatA subfamily. As to quaternary structure, heterotrimer of A, B and C subunits.

It catalyses the reaction L-glutamyl-tRNA(Gln) + L-glutamine + ATP + H2O = L-glutaminyl-tRNA(Gln) + L-glutamate + ADP + phosphate + H(+). Its function is as follows. Allows the formation of correctly charged Gln-tRNA(Gln) through the transamidation of misacylated Glu-tRNA(Gln) in organisms which lack glutaminyl-tRNA synthetase. The reaction takes place in the presence of glutamine and ATP through an activated gamma-phospho-Glu-tRNA(Gln). The sequence is that of Glutamyl-tRNA(Gln) amidotransferase subunit A from Streptococcus equi subsp. zooepidemicus (strain H70).